A 390-amino-acid polypeptide reads, in one-letter code: Succinate--CoA ligase [ADP-forming] subunit beta (390 aa).

One can recognise an ATP-grasp domain in the interval 9–248 (KDILRKFGVS…ISEEDPFEVE (240 aa)). ATP-binding positions include Lys-50, 57–59 (GRG), Glu-103, Met-106, and Glu-111. Residues Asn-203 and Asp-217 each contribute to the Mg(2+) site. Residues Asn-268 and 325–327 (GIV) each bind substrate.

Belongs to the succinate/malate CoA ligase beta subunit family. In terms of assembly, heterotetramer of two alpha and two beta subunits. Mg(2+) serves as cofactor.

The enzyme catalyses succinate + ATP + CoA = succinyl-CoA + ADP + phosphate. It carries out the reaction GTP + succinate + CoA = succinyl-CoA + GDP + phosphate. The protein operates within carbohydrate metabolism; tricarboxylic acid cycle; succinate from succinyl-CoA (ligase route): step 1/1. Its function is as follows. Succinyl-CoA synthetase functions in the citric acid cycle (TCA), coupling the hydrolysis of succinyl-CoA to the synthesis of either ATP or GTP and thus represents the only step of substrate-level phosphorylation in the TCA. The beta subunit provides nucleotide specificity of the enzyme and binds the substrate succinate, while the binding sites for coenzyme A and phosphate are found in the alpha subunit. The chain is Succinate--CoA ligase [ADP-forming] subunit beta from Prosthecochloris aestuarii (strain DSM 271 / SK 413).